The primary structure comprises 786 residues: Tyrosine-protein kinase Btk (786 aa).

The disordered stretch occupies residues 1–23 (MMGTKHRNSHVNGSIKSSSSLRS). Over residues 14–23 (SIKSSSSLRS) the composition is skewed to low complexity. Residues 41–184 (DVVKSGSMVK…WIRAIRQVCE (144 aa)) form the PH domain. The Btk-type zinc finger occupies 187–223 (NTPKSYRYHPGLWSGKKWSCCKGLSRTTFGCRAAAHW). Positions 195, 206, 207, and 217 each coordinate Zn(2+). Over residues 226–240 (ANNNPSNGSSPAQNS) the composition is skewed to low complexity. Residues 226 to 301 (ANNNPSNGSS…TPTSLQPQSS (76 aa)) form a disordered region. Residues 241–260 (TRSISPNSSTTNSQFSLQHN) are compositionally biased toward polar residues. A compositionally biased stretch (gly residues) spans 264 to 290 (SLGGGVGGGLGGGGSLGLGGGGGGGGS). Positions 291 to 301 (CTPTSLQPQSS) are enriched in polar residues. Positions 342 to 402 (HFVKLVVALY…PSNYVKPKAL (61 aa)) constitute an SH3 domain. One can recognise an SH2 domain in the interval 410–503 (WYVGDMSRQR…GLACRLKSSP (94 aa)). Positions 526 to 779 (LMLMEELGSG…FRVLMDQLAL (254 aa)) constitute a Protein kinase domain. Residues 532–540 (LGSGQFGVV) and K554 each bind ATP. Residue D647 is the Proton acceptor of the active site. Y677 bears the Phosphotyrosine; by autocatalysis mark.

Belongs to the protein kinase superfamily. Tyr protein kinase family. TEC subfamily. Zn(2+) is required as a cofactor. In terms of tissue distribution, ring canals in the egg chambers and imaginal disks of third-instar larvae.

It carries out the reaction L-tyrosyl-[protein] + ATP = O-phospho-L-tyrosyl-[protein] + ADP + H(+). Its function is as follows. Required for proper ring canal development. Also required for the development of male genitalia and for adult survival. The protein is Tyrosine-protein kinase Btk of Drosophila melanogaster (Fruit fly).